A 377-amino-acid chain; its full sequence is P2Y purinoceptor 2 (377 aa).

The Extracellular segment spans residues 1–32 (MAADLGPWNDTINGTWDGDELGYRCRFNEDFK). 2 N-linked (GlcNAc...) asparagine glycosylation sites follow: N9 and N13. A helical transmembrane segment spans residues 33 to 59 (YVLLPVSYGVVCVPGLCLNAVALYIFL). Residues 60 to 70 (CRLKTWNASTT) lie on the Cytoplasmic side of the membrane. The chain crosses the membrane as a helical span at residues 71-93 (YMFHLAVSDALYAASLPLLVYYY). The Extracellular segment spans residues 94–110 (ARGDHWPFSTVLCKLVR). C106 and C183 form a disulfide bridge. The helical transmembrane segment at 111–129 (FLFYTNLYCSILFLTCISV) threads the bilayer. Topologically, residues 130–152 (HRCLGVLRPLRSLRWGRARYARR) are cytoplasmic. The chain crosses the membrane as a helical span at residues 153–172 (VAGAVWVLVLACQAPVLYFV). The Extracellular segment spans residues 173 to 194 (TTSARGGRVTCHDTSAPELFSR). The helical transmembrane segment at 195 to 220 (FVAYSSVMLGLLFAVPFAVILVCYVL) threads the bilayer. Residues 221 to 246 (MARRLLKPAYGTSGGLPRAKRKSVRT) lie on the Cytoplasmic side of the membrane. Residues 247-269 (IAVVLAVFALCFLPFHVTRTLYY) traverse the membrane as a helical segment. At 270–287 (SFRSLDLSCHTLNAINMA) the chain is on the extracellular side. The chain crosses the membrane as a helical span at residues 288 to 309 (YKVTRPLASANSCLDPVLYFLA). Topologically, residues 310–377 (GQRLVRFARD…GSENTKDIRL (68 aa)) are cytoplasmic. The segment at 318 to 377 (RDAKPPTGPSPATPARRRLGLRRSDRTDMQRIEDVLGSSEDSRRTESTPAGSENTKDIRL) is disordered. Positions 339–363 (RRSDRTDMQRIEDVLGSSEDSRRTE) are enriched in basic and acidic residues.

The protein belongs to the G-protein coupled receptor 1 family. As to expression, spleen, testis, kidney, liver, lung, heart and brain.

Its subcellular location is the cell membrane. Receptor for ATP and UTP coupled to G-proteins that activate a phosphatidylinositol-calcium second messenger system. The affinity range is UTP = ATP &gt; ATP-gamma-S &gt;&gt; 2-methylthio-ATP = ADP. In Homo sapiens (Human), this protein is P2Y purinoceptor 2 (P2RY2).